We begin with the raw amino-acid sequence, 133 residues long: Small ribosomal subunit protein uS9 (133 aa).

This sequence belongs to the universal ribosomal protein uS9 family.

This Ureaplasma parvum serovar 3 (strain ATCC 700970) protein is Small ribosomal subunit protein uS9.